The sequence spans 350 residues: Tetraacyldisaccharide 4'-kinase (350 aa).

ATP is bound at residue 49-56 (TTGGTGKT).

This sequence belongs to the LpxK family.

The enzyme catalyses a lipid A disaccharide + ATP = a lipid IVA + ADP + H(+). It functions in the pathway glycolipid biosynthesis; lipid IV(A) biosynthesis; lipid IV(A) from (3R)-3-hydroxytetradecanoyl-[acyl-carrier-protein] and UDP-N-acetyl-alpha-D-glucosamine: step 6/6. Its function is as follows. Transfers the gamma-phosphate of ATP to the 4'-position of a tetraacyldisaccharide 1-phosphate intermediate (termed DS-1-P) to form tetraacyldisaccharide 1,4'-bis-phosphate (lipid IVA). This is Tetraacyldisaccharide 4'-kinase from Chlorobaculum tepidum (strain ATCC 49652 / DSM 12025 / NBRC 103806 / TLS) (Chlorobium tepidum).